Here is a 334-residue protein sequence, read N- to C-terminus: Mevalonate kinase (334 aa).

Residue proline 110–alanine 120 coordinates ATP. The Proton acceptor role is filled by aspartate 161.

Belongs to the GHMP kinase family. Mevalonate kinase subfamily. In terms of assembly, homodimer. Mg(2+) is required as a cofactor.

Its subcellular location is the cytoplasm. The catalysed reaction is (R)-mevalonate + ATP = (R)-5-phosphomevalonate + ADP + H(+). Its pathway is isoprenoid biosynthesis; isopentenyl diphosphate biosynthesis via mevalonate pathway; isopentenyl diphosphate from (R)-mevalonate: step 1/3. Its function is as follows. Catalyzes the phosphorylation of (R)-mevalonate (MVA) to (R)-mevalonate 5-phosphate (MVAP). Functions in the mevalonate (MVA) pathway leading to isopentenyl diphosphate (IPP), a key precursor for the biosynthesis of isoprenoid compounds such as archaeal membrane lipids. This chain is Mevalonate kinase, found in Thermococcus gammatolerans (strain DSM 15229 / JCM 11827 / EJ3).